A 628-amino-acid polypeptide reads, in one-letter code: Kelch-like protein diablo (628 aa).

The disordered stretch occupies residues 1–56; that stretch reads MGDLPGSTGGGSGPAAAGNASGNSSSAGNTGLGVAGTTGVDRPPSPARLSHTSEKH. A compositionally biased stretch (low complexity) spans 14-29; the sequence is PAAAGNASGNSSSAGN. A BTB domain is found at 74–141; sequence CDVVLNVGGR…CYTAHIIVEE (68 aa). The BACK domain occupies 176 to 278; the sequence is CLGIRAFADT…SPKFLVGTVG (103 aa). 6 Kelch repeats span residues 325–371, 373–419, 420–466, 468–513, 515–560, and 561–607; these read VLFA…VLND, LYAV…VLDG, FLYA…VLGG, LYAI…VFNN, IYAV…VVNG, and QLYA…VMRA.

The protein operates within protein modification; protein ubiquitination. Its function is as follows. Probable substrate-specific adapter of an E3 ubiquitin-protein ligase complex which mediates the ubiquitination and subsequent proteasomal degradation of target proteins. May have a role in synapse differentiation and growth. The sequence is that of Kelch-like protein diablo from Drosophila persimilis (Fruit fly).